The sequence spans 223 residues: Putative lipoprotein NMB1126/NMB1164 (223 aa).

An N-terminal signal peptide occupies residues 1–19; sequence MKTVSTAVVLAAAAVSLTG. Cys-20 carries the N-palmitoyl cysteine lipid modification. The S-diacylglycerol cysteine moiety is linked to residue Cys-20.

It is found in the cell membrane. The protein is Putative lipoprotein NMB1126/NMB1164 of Neisseria meningitidis serogroup B (strain ATCC BAA-335 / MC58).